A 516-amino-acid chain; its full sequence is Na(+)/H(+) antiporter NhaB (516 aa).

The next 12 membrane-spanning stretches (helical) occupy residues 23 to 43 (LALIIFLIVNPLVFAVAPFVA), 61 to 80 (CYPLLPGGLLAIEALLIGMT), 97 to 117 (LLLIFMVAGIYFMKQLLLFVF), 120 to 140 (LLLGIRSKMLLSLAFCLAAAF), 144 to 164 (FLDALTVVAVVISVAVGFYGI), 202 to 222 (LMMHAGVGTALGGVMTMVGEP), 238 to 258 (FFIRMAPVTVPVMVCGLLTCL), 303 to 323 (AVIGVWLIVALAFHLAEVGLI), 348 to 368 (TEALPFTALLTVFFAIVAVII), 391 to 411 (LFYLFNGLLSSISDNVFVGTV), 447 to 467 (ATPNGQAAFLFLLTSALAPLI), and 475 to 495 (VWMALPYTLVLTLVGLLCVEF).

It belongs to the NhaB Na(+)/H(+) (TC 2.A.34) antiporter family.

The protein resides in the cell inner membrane. The catalysed reaction is 2 Na(+)(in) + 3 H(+)(out) = 2 Na(+)(out) + 3 H(+)(in). Its function is as follows. Na(+)/H(+) antiporter that extrudes sodium in exchange for external protons. The protein is Na(+)/H(+) antiporter NhaB of Klebsiella pneumoniae (strain 342).